Reading from the N-terminus, the 274-residue chain is Centromere protein K (274 aa).

Positions 1–21 are disordered; sequence MSGYQHELPPNISKTSPAPEE. Residues 96–159 adopt a coiled-coil conformation; it reads KEELEKIAQE…NQLTAFSEKR (64 aa).

It belongs to the CENP-K/MCM22 family.

The protein localises to the nucleus. It is found in the chromosome. It localises to the centromere. Its subcellular location is the kinetochore. Functionally, probable component of a centromeric complex involved in assembly of kinetochore proteins, mitotic progression and chromosome segregation. This is Centromere protein K (cenpk) from Xenopus laevis (African clawed frog).